The chain runs to 144 residues: Large ribosomal subunit protein uL15 (144 aa).

The interval 1 to 51 (MKLNELKPATGSRSKRLRKGRGLSSGHGFTSGRGTKGQKAHGKTRLGFEGG) is disordered. The segment covering 23–35 (LSSGHGFTSGRGT) has biased composition (gly residues).

It belongs to the universal ribosomal protein uL15 family. Part of the 50S ribosomal subunit.

Its function is as follows. Binds to the 23S rRNA. This Limosilactobacillus reuteri (strain DSM 20016) (Lactobacillus reuteri) protein is Large ribosomal subunit protein uL15.